The following is an 854-amino-acid chain: Fibroblast growth factor receptor 1 (854 aa).

The first 20 residues, 1–20, serve as a signal peptide directing secretion; sequence MSGLFFLLSELLILLGKINS. Topologically, residues 21–383 are extracellular; sequence VSKKSLCHPE…NFFMNSVPLS (363 aa). Positions 29–120 constitute an Ig-like C2-type 1 domain; it reads PELFKIDNKL…SSVFFLINVT (92 aa). The cysteines at positions 50 and 102 are disulfide-linked. N95, N99, N110, N118, N140, N175, N202, N248, N283, N317, and N346 each carry an N-linked (GlcNAc...) asparagine glycan. Ig-like C2-type domains are found at residues 147–259 and 268–369; these read PEMG…FTFT and PHLT…LSVI. Residues C166 and C242 are joined by a disulfide bond. C288 and C353 form a disulfide bridge. A helical membrane pass occupies residues 384 to 404; it reads IFLVIGFFVAIILLSLIIYCF. Residues 405–854 lie on the Cytoplasmic side of the membrane; sequence FLQYKNAVDS…SDYLEPKCLV (450 aa). Residues 551–822 form the Protein kinase domain; the sequence is KITNKKLGEG…EIVEILIDII (272 aa). ATP is bound by residues 557–565 and K585; that span reads LGEGAFGMV. D689 (proton acceptor) is an active-site residue. Y718 carries the post-translational modification Phosphotyrosine; by autocatalysis.

Belongs to the protein kinase superfamily. Tyr protein kinase family. Fibroblast growth factor receptor subfamily. As to expression, expressed in brain, stem cells and the mesenchymal cells.

Its subcellular location is the membrane. It catalyses the reaction L-tyrosyl-[protein] + ATP = O-phospho-L-tyrosyl-[protein] + ADP + H(+). In terms of biological role, receptor for basic fibroblast growth factor. This Dugesia japonica (Planarian) protein is Fibroblast growth factor receptor 1 (FGFR1).